The sequence spans 1155 residues: DNA-directed RNA polymerase subunit beta (1155 aa).

Belongs to the RNA polymerase beta chain family. In terms of assembly, the RNAP catalytic core consists of 2 alpha, 1 beta, 1 beta' and 1 omega subunit. When a sigma factor is associated with the core the holoenzyme is formed, which can initiate transcription.

The catalysed reaction is RNA(n) + a ribonucleoside 5'-triphosphate = RNA(n+1) + diphosphate. In terms of biological role, DNA-dependent RNA polymerase catalyzes the transcription of DNA into RNA using the four ribonucleoside triphosphates as substrates. This Borreliella afzelii (strain PKo) (Borrelia afzelii) protein is DNA-directed RNA polymerase subunit beta.